The following is a 134-amino-acid chain: Small ribosomal subunit protein uS8c (134 aa).

Belongs to the universal ribosomal protein uS8 family. Part of the 30S ribosomal subunit.

The protein localises to the plastid. The protein resides in the chloroplast. Functionally, one of the primary rRNA binding proteins, it binds directly to 16S rRNA central domain where it helps coordinate assembly of the platform of the 30S subunit. The protein is Small ribosomal subunit protein uS8c (rps8) of Vitis vinifera (Grape).